The chain runs to 124 residues: Small ribosomal subunit protein uS12 (124 aa).

The residue at position 89 (Asp-89) is a 3-methylthioaspartic acid. Lys-108 is modified (N6-acetyllysine).

The protein belongs to the universal ribosomal protein uS12 family. As to quaternary structure, part of the 30S ribosomal subunit. Contacts proteins S8 and S17. May interact with IF1 in the 30S initiation complex.

Its function is as follows. With S4 and S5 plays an important role in translational accuracy. Interacts with and stabilizes bases of the 16S rRNA that are involved in tRNA selection in the A site and with the mRNA backbone. Located at the interface of the 30S and 50S subunits, it traverses the body of the 30S subunit contacting proteins on the other side and probably holding the rRNA structure together. The combined cluster of proteins S8, S12 and S17 appears to hold together the shoulder and platform of the 30S subunit. The chain is Small ribosomal subunit protein uS12 from Escherichia coli O6:K15:H31 (strain 536 / UPEC).